The primary structure comprises 103 residues: uncharacterized protein (103 aa).

The protein localises to the mitochondrion. This is an uncharacterized protein from Claviceps purpurea (Ergot fungus).